The sequence spans 273 residues: Undecaprenyl-diphosphatase (273 aa).

The next 7 helical transmembrane spans lie at 13–35 (GLVE…VFGN), 45–62 (VFEI…VFEY), 82–102 (FVLN…LFDK), 108–128 (LFNP…ILWV), 186–206 (TEFS…YDVL), 219–239 (LILI…KALL), and 250–270 (FAYY…SGWI).

Belongs to the UppP family.

It is found in the cell inner membrane. It carries out the reaction di-trans,octa-cis-undecaprenyl diphosphate + H2O = di-trans,octa-cis-undecaprenyl phosphate + phosphate + H(+). Catalyzes the dephosphorylation of undecaprenyl diphosphate (UPP). Confers resistance to bacitracin. This chain is Undecaprenyl-diphosphatase, found in Neisseria gonorrhoeae (strain NCCP11945).